Here is a 294-residue protein sequence, read N- to C-terminus: ATP phosphoribosyltransferase (294 aa).

Belongs to the ATP phosphoribosyltransferase family. Long subfamily. Mg(2+) serves as cofactor.

The protein resides in the cytoplasm. It catalyses the reaction 1-(5-phospho-beta-D-ribosyl)-ATP + diphosphate = 5-phospho-alpha-D-ribose 1-diphosphate + ATP. The protein operates within amino-acid biosynthesis; L-histidine biosynthesis; L-histidine from 5-phospho-alpha-D-ribose 1-diphosphate: step 1/9. With respect to regulation, feedback inhibited by histidine. Catalyzes the condensation of ATP and 5-phosphoribose 1-diphosphate to form N'-(5'-phosphoribosyl)-ATP (PR-ATP). Has a crucial role in the pathway because the rate of histidine biosynthesis seems to be controlled primarily by regulation of HisG enzymatic activity. The protein is ATP phosphoribosyltransferase of Chlorobium phaeovibrioides (strain DSM 265 / 1930) (Prosthecochloris vibrioformis (strain DSM 265)).